A 233-amino-acid polypeptide reads, in one-letter code: 7-cyano-7-deazaguanine synthase (233 aa).

ATP is bound at residue 7-17; that stretch reads LSGGLDSAVTS. Residues cysteine 195, cysteine 206, cysteine 209, and cysteine 212 each coordinate Zn(2+).

It belongs to the QueC family. Zn(2+) serves as cofactor.

It catalyses the reaction 7-carboxy-7-deazaguanine + NH4(+) + ATP = 7-cyano-7-deazaguanine + ADP + phosphate + H2O + H(+). The protein operates within purine metabolism; 7-cyano-7-deazaguanine biosynthesis. Functionally, catalyzes the ATP-dependent conversion of 7-carboxy-7-deazaguanine (CDG) to 7-cyano-7-deazaguanine (preQ(0)). This chain is 7-cyano-7-deazaguanine synthase, found in Methanococcus maripaludis (strain C5 / ATCC BAA-1333).